The chain runs to 263 residues: Renal glandular kallikrein (263 aa).

Positions 1 to 18 (MWFLILFLALFLGGIDAA) are cleaved as a signal peptide. Residues 19-24 (PPVQSR) constitute a propeptide, activation peptide. Residues 25–260 (IIGGFNCEKN…YRSWIKDVMA (236 aa)) form the Peptidase S1 domain. Intrachain disulfides connect cysteine 31/cysteine 175, cysteine 50/cysteine 66, cysteine 153/cysteine 221, cysteine 186/cysteine 200, and cysteine 211/cysteine 236. The Charge relay system role is filled by histidine 65. Asparagine 102 carries an N-linked (GlcNAc...) asparagine glycan. The active-site Charge relay system is aspartate 121. The active-site Charge relay system is the serine 215.

This sequence belongs to the peptidase S1 family. Kallikrein subfamily.

The catalysed reaction is Preferential cleavage of Arg-|-Xaa bonds in small molecule substrates. Highly selective action to release kallidin (lysyl-bradykinin) from kininogen involves hydrolysis of Met-|-Xaa or Leu-|-Xaa.. Functionally, glandular kallikreins cleave Met-Lys and Arg-Ser bonds in kininogen to release Lys-bradykinin. The protein is Renal glandular kallikrein of Mastomys natalensis (African soft-furred rat).